We begin with the raw amino-acid sequence, 525 residues long: DNA damage-binding protein CMR1 (525 aa).

Disordered regions lie at residues 38–86 and 212–233; these read AGIF…AESE and GILD…EYPD. Over residues 53 to 62 the composition is skewed to basic residues; that stretch reads TKKKPAPKRV. WD repeat units follow at residues 183 to 224, 241 to 281, 288 to 328, 339 to 379, 384 to 425, 448 to 491, and 494 to 525; these read ITRE…DQNE, PHTN…ATEA, SDDE…KANP, LSEK…TKHP, EHES…KDWK, GKWV…LAQL, and DVIT…CLWM. Over residues 223-232 the composition is skewed to acidic residues; it reads NESDEEDEYP.

It belongs to the WD repeat DDB2/WDR76 family.

Functionally, DNA-binding protein that binds to both single- and double-stranded DNA. Binds preferentially to UV-damaged DNA. May be involved in DNA-metabolic processes. The polypeptide is DNA damage-binding protein CMR1 (Coccidioides immitis (strain RS) (Valley fever fungus)).